The following is a 555-amino-acid chain: MIWVAVVITMLLFILVAKPTGIYLEKTFQGSKKLDKVFGPFEKLIFKITGVKEYNQTWKQYALSLVLLNGFMIVVVYFIFRLQGVLPLNPAHIEGMEPTLAFNTAISFMADTNLQHYSGENGLSYLSQLIGITFLMFAAPATTLALVMAFIRGLAGKELGNFFVDFTRALTRVFLPITFMAALVFVALGVPQTLDGAVTAQTIDGAKQSILRGPVASFVSIKELGNNGGGFFGANSTHPFENPGQMSNILQMMLMMLLPTALPFTYGRMVGNKKQGRILFVSLFMVFLLGFITITTSELNGNPALNGMGIEHVQGSTEGKEVRFGTVFSSLYATVTTAAETGAVNTMHDTLTPIGGLVPLVNMMLNTVYGGVGAGFVNIIMYAIIAVFISGLMVGRTPEFLGKKIEGKEMKLIAVTILFHPLLILGFSALALSTSLGTDAISHSGFHGLTQVVYEYTSSAANNGSGFEGLADNTPFWNITTGLVMFLGRYFSLITMLAVAASLKEKTVVPETVGTFRTDNSLFGGIFIGTIVIVGALTFFPMLVLGPIAEFLTLK.

10 consecutive transmembrane segments (helical) span residues 2–22 (IWVA…PTGI), 60–80 (QYAL…YFIF), 130–150 (IGIT…VMAF), 173–193 (VFLP…VPQT), 246–266 (MSNI…PFTY), 278–298 (ILFV…TTSE), 374–394 (AGFV…GLMV), 412–432 (LIAV…ALAL), 483–503 (LVMF…AASL), and 525–545 (GIFI…MLVL).

The protein belongs to the KdpA family. As to quaternary structure, the system is composed of three essential subunits: KdpA, KdpB and KdpC.

It is found in the cell membrane. Functionally, part of the high-affinity ATP-driven potassium transport (or Kdp) system, which catalyzes the hydrolysis of ATP coupled with the electrogenic transport of potassium into the cytoplasm. This subunit binds the extracellular potassium ions and delivers the ions to the membrane domain of KdpB through an intramembrane tunnel. The polypeptide is Potassium-transporting ATPase potassium-binding subunit (Bacillus cereus (strain AH187)).